We begin with the raw amino-acid sequence, 206 residues long: MSFTGERKGRLIVFEGIDGTGKSTHIGHLRKYLEEKELEVVQSFEPTRGRWGRMLRDSAVTGRLSVEEEVALFLKDRREHVKMLIAPALARGAWVLLDRYYLSMMAYQGARGIDPEVIRAANEEFAPVPDAVVWLDIPVSVALERIGNRGERDAFETEAGLAACRSVFASVHAPWMLRIDADAGKEEVAARVRKALSMRFPDVIGA.

16–23 (GIDGTGKS) is an ATP binding site.

Belongs to the thymidylate kinase family.

It carries out the reaction dTMP + ATP = dTDP + ADP. Its function is as follows. Phosphorylation of dTMP to form dTDP in both de novo and salvage pathways of dTTP synthesis. The protein is Thymidylate kinase of Akkermansia muciniphila (strain ATCC BAA-835 / DSM 22959 / JCM 33894 / BCRC 81048 / CCUG 64013 / CIP 107961 / Muc).